A 273-amino-acid chain; its full sequence is Aliphatic sulfonates import ATP-binding protein SsuB 2 (273 aa).

Positions 17 to 241 (LLDLRITRKL…PRDRRDPTLA (225 aa)) constitute an ABC transporter domain. 50–57 (GPSGCGKS) is an ATP binding site.

This sequence belongs to the ABC transporter superfamily. Aliphatic sulfonates importer (TC 3.A.1.17.2) family. As to quaternary structure, the complex is composed of two ATP-binding proteins (SsuB), two transmembrane proteins (SsuC) and a solute-binding protein (SsuA).

It is found in the cell inner membrane. It carries out the reaction ATP + H2O + aliphatic sulfonate-[sulfonate-binding protein]Side 1 = ADP + phosphate + aliphatic sulfonateSide 2 + [sulfonate-binding protein]Side 1.. In terms of biological role, part of the ABC transporter complex SsuABC involved in aliphatic sulfonates import. Responsible for energy coupling to the transport system. The polypeptide is Aliphatic sulfonates import ATP-binding protein SsuB 2 (Burkholderia lata (strain ATCC 17760 / DSM 23089 / LMG 22485 / NCIMB 9086 / R18194 / 383)).